The primary structure comprises 131 residues: Holo-[acyl-carrier-protein] synthase (131 aa).

Mg(2+)-binding residues include Asp-8 and Glu-59.

This sequence belongs to the P-Pant transferase superfamily. AcpS family. It depends on Mg(2+) as a cofactor.

The protein localises to the cytoplasm. The enzyme catalyses apo-[ACP] + CoA = holo-[ACP] + adenosine 3',5'-bisphosphate + H(+). In terms of biological role, transfers the 4'-phosphopantetheine moiety from coenzyme A to a Ser of acyl-carrier-protein. The polypeptide is Holo-[acyl-carrier-protein] synthase (Orientia tsutsugamushi (strain Boryong) (Rickettsia tsutsugamushi)).